A 380-amino-acid polypeptide reads, in one-letter code: Protein Wnt-5a (380 aa).

Residues 1–40 (MRKNLWTFQFGGEASGLVGSAMVSQHFVVLLMSLYCLTQS) form the signal peptide. The cysteines at positions 104 and 115 are disulfide-linked. Asparagine 114 and asparagine 120 each carry an N-linked (GlcNAc...) asparagine glycan. 10 disulfides stabilise this stretch: cysteine 154-cysteine 162, cysteine 164-cysteine 182, cysteine 238-cysteine 252, cysteine 240-cysteine 247, cysteine 309-cysteine 340, cysteine 325-cysteine 335, cysteine 339-cysteine 379, cysteine 355-cysteine 370, cysteine 357-cysteine 367, and cysteine 362-cysteine 363. A lipid anchor (O-palmitoleoyl serine; by PORCN) is attached at serine 244. N-linked (GlcNAc...) asparagine glycans are attached at residues asparagine 312 and asparagine 326.

Belongs to the Wnt family. In terms of processing, palmitoleoylation is required for efficient binding to frizzled receptors. Depalmitoleoylation leads to Wnt signaling pathway inhibition. As to expression, found primarily in ectoderm with lower levels of expression in mesoderm. Detected in the head and tail with lower expression in the middle of the embryo. No expression was found in the notochord.

Its subcellular location is the secreted. The protein resides in the extracellular space. It localises to the extracellular matrix. Functionally, ligand for members of the frizzled family of seven transmembrane receptors. Can activate or inhibit canonical Wnt signaling, depending on receptor context. Plays a role in normal embryonic development. This Xenopus laevis (African clawed frog) protein is Protein Wnt-5a (wnt5a).